The chain runs to 102 residues: EGGIWTQLALALVKNLATLWQSGDFQFLGHECHYRVNPTVKRLKWKYKGKFWCPSWTSITGRATKSSRSGAVEHSVRDFVSQAKSSGLITEKEAQTFISQYE.

A disulfide bridge connects residues Cys-32 and Cys-53.

Functionally, binds tightly to LPS and thus specifically inhibits the LPS-mediated activation of the hemolymph coagulation. It has a strong antibacterial effect especially on the growth of Gram-negative bacteria. This chain is Anti-lipopolysaccharide factor, found in Tachypleus tridentatus (Japanese horseshoe crab).